Reading from the N-terminus, the 440-residue chain is Chromosome partition protein MukF (440 aa).

The segment at 208–236 (LSETSGTLRELQDTLEAAGDKLQANLLRI) is leucine-zipper.

The protein belongs to the MukF family. As to quaternary structure, interacts, and probably forms a ternary complex, with MukE and MukB via its C-terminal region. The complex formation is stimulated by calcium or magnesium. It is required for an interaction between MukE and MukB.

Its subcellular location is the cytoplasm. It localises to the nucleoid. Its function is as follows. Involved in chromosome condensation, segregation and cell cycle progression. May participate in facilitating chromosome segregation by condensation DNA from both sides of a centrally located replisome during cell division. Not required for mini-F plasmid partitioning. Probably acts via its interaction with MukB and MukE. Overexpression results in anucleate cells. It has a calcium binding activity. The chain is Chromosome partition protein MukF from Yersinia enterocolitica serotype O:8 / biotype 1B (strain NCTC 13174 / 8081).